The following is a 209-amino-acid chain: FAS-associated death domain protein (209 aa).

The DED domain maps to 3–81 (PFLVLLHSVS…RKDLLLRLDD (79 aa)). In terms of domain architecture, Death spans 97–181 (LRAAMEIICD…VVADLIEEDQ (85 aa)). Positions 187–200 (QSGSANPGSFTAWD) are enriched in polar residues. Residues 187 to 209 (QSGSANPGSFTAWDSGSAAPGAS) form a disordered region.

As to quaternary structure, can self-associate. Component of the AIM2 PANoptosome complex, a multiprotein complex that drives inflammatory cell death (PANoptosis). Component of the death-induced signaling complex (DISC) composed of cell surface receptor FAS/CD95 or TNFRSF1A, adapter protein FADD and the CASP8 protease; recruitment of CASP8 to the complex is required for processing of CASP8 into the p18 and p10 subunits. Interacts (via death domain) with FAS (via death domain). Interacts directly (via DED domain) with NOL3 (via CARD domain); inhibits death-inducing signaling complex (DISC) assembly by inhibiting the increase in FAS-FADD binding induced by FAS activation. Interacts with CFLAR, PEA15 and MBD4. When phosphorylated, part of a complex containing HIPK3 and FAS. May interact with MAVS/IPS1. Interacts with MOCV v-CFLAR protein and PIDD1. Interacts with RIPK1 and TRADD. Interacts with stimulated TNFRSF10B. Interacts with DDX24. Post-translationally, phosphorylated.

The protein localises to the cytoplasm. Functionally, apoptotic adapter molecule that recruits caspases CASP8 or CASP10 to the activated FAS/CD95 or TNFRSF1A/TNFR-1 receptors. The resulting aggregate called the death-inducing signaling complex (DISC) performs CASP8 proteolytic activation. Active CASP8 initiates the subsequent cascade of caspases mediating apoptosis. Involved in interferon-mediated antiviral immune response, playing a role in the positive regulation of interferon signaling. The sequence is that of FAS-associated death domain protein from Bos taurus (Bovine).